Consider the following 614-residue polypeptide: Kelch-like protein 40 (614 aa).

The 68-residue stretch at 33 to 100 (IDCVLKIQGK…IYTSEIEITE (68 aa)) folds into the BTB domain. Residues 135–237 (CLAIFRLGLL…PQDYIKNKVE (103 aa)) enclose the BACK domain. 5 Kelch repeats span residues 353–405 (QLFV…ESEN), 406–455 (SIYL…SHDN), 456–503 (LVYV…VHKG), 504–550 (KIFI…SMNG), and 552–606 (LYAI…AARL).

It belongs to the KLHL40 family. Component of the BCR(KLHL40) E3 ubiquitin ligase complex.

It localises to the cytoplasm. It is found in the myofibril. Its subcellular location is the sarcomere. The protein resides in the a band. The protein localises to the i band. Substrate-specific adapter of a BCR (BTB-CUL3-RBX1) E3 ubiquitin ligase complex that acts as a key regulator of skeletal muscle development. The sequence is that of Kelch-like protein 40 (klhl40) from Xenopus laevis (African clawed frog).